We begin with the raw amino-acid sequence, 331 residues long: Protoheme IX farnesyltransferase (331 aa).

The next 8 helical transmembrane spans lie at 63–83 (LACT…LNCL), 109–129 (SVFI…VSGV), 132–152 (LAAG…TAFL), 160–180 (IVFG…AAAG), 188–208 (WLFS…AILL), 215–235 (VGIP…AISV), 241–261 (VFLS…YGIL), and 294–314 (ILYM…VSIV).

This sequence belongs to the UbiA prenyltransferase family. Protoheme IX farnesyltransferase subfamily.

The protein localises to the cell inner membrane. It catalyses the reaction heme b + (2E,6E)-farnesyl diphosphate + H2O = Fe(II)-heme o + diphosphate. It participates in porphyrin-containing compound metabolism; heme O biosynthesis; heme O from protoheme: step 1/1. In terms of biological role, converts heme B (protoheme IX) to heme O by substitution of the vinyl group on carbon 2 of heme B porphyrin ring with a hydroxyethyl farnesyl side group. The polypeptide is Protoheme IX farnesyltransferase (Prochlorococcus marinus (strain NATL1A)).